The sequence spans 544 residues: Chaperonin GroEL (544 aa).

ATP contacts are provided by residues 30-33 (TLGP), lysine 51, 87-91 (DGTTT), glycine 415, 481-483 (DAL), and aspartate 497.

Belongs to the chaperonin (HSP60) family. As to quaternary structure, forms a cylinder of 14 subunits composed of two heptameric rings stacked back-to-back. Interacts with the co-chaperonin GroES.

The protein localises to the cytoplasm. The catalysed reaction is ATP + H2O + a folded polypeptide = ADP + phosphate + an unfolded polypeptide.. Its function is as follows. Together with its co-chaperonin GroES, plays an essential role in assisting protein folding. The GroEL-GroES system forms a nano-cage that allows encapsulation of the non-native substrate proteins and provides a physical environment optimized to promote and accelerate protein folding. In Chlamydia trachomatis serovar L2 (strain ATCC VR-902B / DSM 19102 / 434/Bu), this protein is Chaperonin GroEL.